The following is a 580-amino-acid chain: Ran GTPase-activating protein 1 (580 aa).

LRR repeat units follow at residues 48 to 71 (YEGL…AIAE), 111 to 134 (GAQL…GFEA), 141 to 168 (CFTL…ALTE), 207 to 230 (IGTL…ALAE), 235 to 258 (NSLL…AMAE), 292 to 315 (LHKL…SLAE), and 320 to 343 (KSDL…QVQE). Residues 356-429 (SLSDDEDEDD…PPKLPVDAST (74 aa)) are disordered. Residues 358-399 (SDDEDEDDDDDDEDDDDDEDDENDDEEVEEEEEEVEEEEGGD) are compositionally biased toward acidic residues.

This sequence belongs to the RNA1 family. As to quaternary structure, homodimer. Identified in a complex with RANBP2 and the ubiquitin-conjugating enzyme E2 (UBE2I). In terms of processing, may be sumoylated.

It is found in the cytoplasm. Its subcellular location is the nucleus. The protein resides in the nucleoplasm. It localises to the nucleus envelope. The protein localises to the chromosome. It is found in the centromere. Its subcellular location is the kinetochore. The protein resides in the cytoskeleton. It localises to the spindle. Functionally, GTPase activator for RAN, converting it to the GDP-bound state. Converts cytoplasmic GTP-bound RAN to GDP-bound RAN, which is required for RAN-mediated nuclear import and export. This Xenopus laevis (African clawed frog) protein is Ran GTPase-activating protein 1 (rangap1).